Reading from the N-terminus, the 683-residue chain is uncharacterized protein (683 aa).

Transmembrane regions (helical) follow at residues 12–32 (LLLYYGLFTLGLFGFVGMMGL), 41–61 (LWLGYVFLFITIAIYACIGLI), 84–104 (MAIAADWMSAASFIGLAGILF), 110–130 (GLAYVMGWTGGYCLVAFLLAP), 162–182 (IAVLAASLCSFVYLVAQIQGV), 194–214 (FAVGIFFGLAGILVCSFLGGM), 221–241 (QVAQYIMMIVAFLVTVSMIAW), 377–397 (LNFVLLVFCLMVGTASLPHIL), 413–433 (VAWAVFFIALLYVSAPTLAAL), 495–515 (IAGLPYVISGLIAAGALAAAL), 548–568 (VTTAKIVLLGVALFASYVTSL), 573–593 (ILFLVGAAFSLAASSFFPVLV), 603–623 (AAGAVAGMAAGLGVAVYYIIV), and 645–665 (IASGAFGVPAGFAVAIIVSLL).

Belongs to the sodium:solute symporter (SSF) (TC 2.A.21) family.

The protein resides in the cell membrane. This is an uncharacterized protein from Cupriavidus necator (strain ATCC 17699 / DSM 428 / KCTC 22496 / NCIMB 10442 / H16 / Stanier 337) (Ralstonia eutropha).